We begin with the raw amino-acid sequence, 1322 residues long: Phosphoribosylformylglycinamidine synthase (1322 aa).

ATP is bound by residues Gly-307 to Asp-318 and Ala-678. Mg(2+)-binding residues include Glu-718, Asn-722, and Asp-886. The Glutamine amidotransferase type-1 domain occupies Met-1069 to Gly-1322. The active-site Nucleophile is the Cys-1162. Residues His-1287 and Glu-1289 contribute to the active site.

It in the N-terminal section; belongs to the FGAMS family. In terms of assembly, monomer.

Its subcellular location is the cytoplasm. It carries out the reaction N(2)-formyl-N(1)-(5-phospho-beta-D-ribosyl)glycinamide + L-glutamine + ATP + H2O = 2-formamido-N(1)-(5-O-phospho-beta-D-ribosyl)acetamidine + L-glutamate + ADP + phosphate + H(+). The protein operates within purine metabolism; IMP biosynthesis via de novo pathway; 5-amino-1-(5-phospho-D-ribosyl)imidazole from N(2)-formyl-N(1)-(5-phospho-D-ribosyl)glycinamide: step 1/2. Its function is as follows. Phosphoribosylformylglycinamidine synthase involved in the purines biosynthetic pathway. Catalyzes the ATP-dependent conversion of formylglycinamide ribonucleotide (FGAR) and glutamine to yield formylglycinamidine ribonucleotide (FGAM) and glutamate. This Photobacterium profundum (strain SS9) protein is Phosphoribosylformylglycinamidine synthase.